Consider the following 70-residue polypeptide: Palustrin-2ISa (70 aa).

Positions 1–22 are cleaved as a signal peptide; sequence MFTLKKSLLLLFFLGTISLSLC. The propeptide at 23–39 is removed in mature form; the sequence is EQERSAEDEGEVIEEEV. The cysteines at positions 64 and 70 are disulfide-linked.

As to expression, expressed by the skin glands.

It is found in the secreted. Functionally, has antimicrobial activity against Gram-negative bacterium E.coli ATCC 8739 (MIC=100 ug), against Gram positive bacteria S.aureus ATCC 6538 (MIC=25 ug), methicillin-resistant S.aureus ATCC 43300 (MIC=100 ug), B.subtilis ATCC 6633 (MIC=12.5 ug) and against fungus C.albicans ATCC 90028 (MIC=100 ug). The sequence is that of Palustrin-2ISa from Odorrana ishikawae (Ishikawa's frog).